The sequence spans 385 residues: MYVSRLQLQDFRIYRSLNLALPPGVCLFYGANAAGKTTILEALYYLATTRSLRASVERELIALEAAGDLGLPPFARLAASLQPQPEAEMQTIEIVLQRKFGADGDLAPTTSKTIRINKIARRALDLIGQLRVVMFAPQDLELVTGAPAERRRYLDVTLSQIDGRYVRALSRYNQVLTQRNGLLRTSRERGRAASEQDLAFWDEELAKAGVYVLRERRRAVTTLDQLAQRLYAEISGSDLDLRLNYLDTTPAHDVPSFQAALKQLRREERERGVTLIGPHRDDLSIQLAEREVGSFGSRGQQRASTLALRLAEAELMHSRTGDRPVLLLDDLLSELDQKRREHLLTTIVRPQQQTLITATDLDDFSPNFLSQITRMHVDHGLIFPA.

30 to 37 (GANAAGKT) provides a ligand contact to ATP.

It belongs to the RecF family.

It localises to the cytoplasm. In terms of biological role, the RecF protein is involved in DNA metabolism; it is required for DNA replication and normal SOS inducibility. RecF binds preferentially to single-stranded, linear DNA. It also seems to bind ATP. The sequence is that of DNA replication and repair protein RecF from Herpetosiphon aurantiacus (strain ATCC 23779 / DSM 785 / 114-95).